Consider the following 383-residue polypeptide: Ovalbumin (383 aa).

Gly2 carries the post-translational modification N-acetylglycine. The not cleaved signal peptide spans 22–48 (HHANDNMLYSPFAILSTLAMVFLGAKD). At Ser69 the chain carries Phosphoserine. The cysteines at positions 74 and 121 are disulfide-linked. Asn293 and Asn312 each carry an N-linked (GlcNAc...) asparagine glycan. Ser345 is modified (phosphoserine).

The protein belongs to the serpin family. Ov-serpin subfamily. Post-translationally, the signal sequence is not cleaved. The functional signal for membrane translocation of ovalbumin becomes accessible when the nascent chain is 50 to 60 residues long. The hydrophobic sequence which lies between residues 27 and 43 folds back on the preceding residues to form an amphipathic hairpin structure which is the signal element recognized by the membrane. As to expression, major protein of egg white.

Its subcellular location is the secreted. Storage protein of egg white. Lack protease inhibitory activity. In Coturnix coturnix (Common quail), this protein is Ovalbumin (SERPINB14).